Here is a 337-residue protein sequence, read N- to C-terminus: MAKIGVLGAGTWGMALARMLSNSGHEVTVWSALPQEVDELSRTRRQKNLPGMVIPDEIKFTKEIAEACQDKDIILFAVPSVFVRSIAKTAAAFIPDGQIIVDVAKGIEPDTLLTLTEVIADELNKDGKHGNVHYVAMSGPTHAEEVAKDLPTTIVSACEDQAVAKKVQDVFMNKNMRVYTNSDRLGVELCGALKNVIALASGICSGLGYGDNMRAALIIRGMAEIKRLGLKMGGKEDSFDGLAGMGDLIVTATSKESRNNNAGYLIGKGKSAEEAKKEVGMVVEGINAIPAALELADKYDVEMPIVFAVDAVVNRGADARETVDALMLREKKSEMTK.

Residues Thr-11, Trp-12, and Lys-105 each contribute to the NADPH site. Residues Lys-105, Gly-139, and Thr-141 each contribute to the sn-glycerol 3-phosphate site. NADPH is bound at residue Ala-143. Sn-glycerol 3-phosphate-binding residues include Lys-194, Asp-247, Ser-257, Arg-258, and Asn-259. Lys-194 functions as the Proton acceptor in the catalytic mechanism. Arg-258 contributes to the NADPH binding site. The NADPH site is built by Val-282 and Glu-284.

Belongs to the NAD-dependent glycerol-3-phosphate dehydrogenase family.

The protein resides in the cytoplasm. The catalysed reaction is sn-glycerol 3-phosphate + NAD(+) = dihydroxyacetone phosphate + NADH + H(+). It carries out the reaction sn-glycerol 3-phosphate + NADP(+) = dihydroxyacetone phosphate + NADPH + H(+). It participates in membrane lipid metabolism; glycerophospholipid metabolism. Its function is as follows. Catalyzes the reduction of the glycolytic intermediate dihydroxyacetone phosphate (DHAP) to sn-glycerol 3-phosphate (G3P), the key precursor for phospholipid synthesis. The sequence is that of Glycerol-3-phosphate dehydrogenase [NAD(P)+] 2 from Lactobacillus delbrueckii subsp. bulgaricus (strain ATCC 11842 / DSM 20081 / BCRC 10696 / JCM 1002 / NBRC 13953 / NCIMB 11778 / NCTC 12712 / WDCM 00102 / Lb 14).